The following is a 215-amino-acid chain: Ependymin-1 (215 aa).

An N-terminal signal peptide occupies residues 1–20 (MHTVKLLCVVFSCLCAVAWA). Asparagine 71 and asparagine 94 each carry an N-linked (GlcNAc...) asparagine glycan.

This sequence belongs to the ependymin family. Forms disulfide-linked dimers. Different glycosylation variants are known as EPD-beta and EPD-gamma. Post-translationally, binds calcium through the terminal sialic acids. As to expression, EPDs are synthesized in the meninx and secreted in the cerebrospinal fluid.

The protein resides in the secreted. In terms of biological role, may play a role in neural plasticity. May be involved during axon regeneration. The protein is Ependymin-1 (epd1) of Carassius auratus (Goldfish).